Reading from the N-terminus, the 230-residue chain is Ropporin-1-like protein (230 aa).

One can recognise an RIIa domain in the interval P17–P54.

Belongs to the ropporin family. As to quaternary structure, component of the axonemal radial spoke complex 1 (RS1), at least composed of spoke head proteins RSPH1, RSPH3, RSPH9 and the cilia-specific component RSPH4A or sperm-specific component RSPH6A, spoke stalk proteins RSPH14, DNAJB13, DYDC1, ROPN1L and NME5, and the anchor protein IQUB. May interact with AKAP3. Interacts with FSCB; the interaction increases upon spermatozoa capacitation conditions. Interacts with CFAP61. In terms of processing, sumoylated, sumoylation decreases upon spermatozoa capacitation conditions.

The protein resides in the cell projection. It localises to the cilium. Its subcellular location is the flagellum. Functionally, functions as part of axonemal radial spoke complexes that play an important part in the motility of sperm and cilia. Important for male fertility. With ROPN1, involved in fibrous sheath integrity and sperm motility, plays a role in PKA-dependent signaling processes required for spermatozoa capacitation. This chain is Ropporin-1-like protein (ROPN1L), found in Macaca fascicularis (Crab-eating macaque).